A 202-amino-acid polypeptide reads, in one-letter code: Small ribosomal subunit protein uS4 (202 aa).

The span at 1–13 shows a compositional bias: basic residues; it reads MSRYRGPRLRVTR. The segment at 1–42 is disordered; the sequence is MSRYRGPRLRVTRRLGELPGLTRKASKKSNPPGQHGQARRKR. An S4 RNA-binding domain is found at 90 to 152; it reads NRLDNVCFRL…KASKKLVEGN (63 aa).

The protein belongs to the universal ribosomal protein uS4 family. Part of the 30S ribosomal subunit. Contacts protein S5. The interaction surface between S4 and S5 is involved in control of translational fidelity.

Functionally, one of the primary rRNA binding proteins, it binds directly to 16S rRNA where it nucleates assembly of the body of the 30S subunit. With S5 and S12 plays an important role in translational accuracy. The sequence is that of Small ribosomal subunit protein uS4 from Prochlorococcus marinus (strain MIT 9515).